Reading from the N-terminus, the 304-residue chain is L-xylo-3-hexulose reductase (304 aa).

NADP(+) contacts are provided by Ile19, Asp68, and Asn107. Catalysis depends on proton donor residues Ser163 and Ser164. 3 residues coordinate NADP(+): Tyr177, Lys181, and Ala209. Tyr177 (proton acceptor) is an active-site residue. Residue Lys181 is the Lowers pKa of active site Tyr of the active site.

It belongs to the short-chain dehydrogenases/reductases (SDR) family.

It carries out the reaction D-sorbitol + NADP(+) = L-xylo-3-hexulose + NADPH + H(+). The protein operates within carbohydrate degradation. L-xylulose reductase involved in the catabolism of D-galactose through an oxidoreductive pathway. Catalyzes the NADPH-dependent reduction of L-xylo-3-hexulose. Is also active with D-ribulose and L-xylulose, and to a lesser extent with D-xylulose, D-fructose and L- and D-sorbose. In the reverse reaction, shows activity with D-sorbitol and D-mannitol, low activity with xylitol, but no activity with galactitol, ribitol, and L- and D-arabitol. The chain is L-xylo-3-hexulose reductase from Hypocrea jecorina (strain QM6a) (Trichoderma reesei).